The sequence spans 471 residues: U1 small nuclear ribonucleoprotein 70 kDa (471 aa).

Residues F48 to R78 form a disordered region. Positions A60 to R78 are enriched in basic and acidic residues. Residues H92–G202 are required for interaction with U1 RNA. In terms of domain architecture, RRM spans K103–V184. Residues W187–E471 are disordered. Over residues L192 to R201 the composition is skewed to gly residues. Residues N207 to R245 show a composition bias toward basic and acidic residues. Basic residues predominate over residues R246–S259. A compositionally biased stretch (basic and acidic residues) spans R260–R293. The span at D294–E303 shows a compositional bias: basic residues. Basic and acidic residues-rich tracts occupy residues R304–G321 and I344–P428.

As to quaternary structure, component of the U1 snRNP. The U1 snRNP is composed of the U1 snRNA and the 7 core Sm proteins snrpb, snrpd1, snrpd2, snrpd3, snrpe, snrpf and snrpg that assemble in a heptameric protein ring on the Sm site of the small nuclear RNA to form the core snRNP, and at least three U1 snRNP-specific proteins snrnp70/U1-70K, snrpa/U1-A and snrpc/U1-C.

The protein localises to the nucleus speckle. Its subcellular location is the nucleus. The protein resides in the nucleoplasm. In terms of biological role, component of the spliceosomal U1 snRNP, which is essential for recognition of the pre-mRNA 5' splice-site and the subsequent assembly of the spliceosome. snrnp70 binds to the loop I region of U1-snRNA. This chain is U1 small nuclear ribonucleoprotein 70 kDa (snrnp70), found in Xenopus tropicalis (Western clawed frog).